Reading from the N-terminus, the 695-residue chain is MSRLSQLLNSKKAKQKPPSEHPIGLSSILKQDSSSSSDSPNFFPSSSTNDHQERDTINDTNFVVPEKQKTSKLALLAAERKKLHSSFPSTQQQPPKTEKEKEKEPIQAKHKKNVENDFLLQRFRKVRIAEKKDSEQPSSHEIHLTDDDDKTTLQKQMVESDQLKKNPQEVKLAPPSSFAKCLTGAKKRVFEDQIEIHLSKSSLLGFNAPSPDDIVLMAQSKSKSFQKHKRLDEQLLNSVKSMKKVSQQLKPQKNTNDSNNDHTLLSQDQLIELSKLVKPRTKLLLLGPPKSGKKTLLSRLFFQIGSFDPKTMQKCTVLNAKKESLSSVLKSTKTKWYDFETFSNSYSSTIIDFPLGIFTTNASSRDNFLKHSSLFQVMNTAIFTIDCLNPLEGLDGISSILQLMNGLSISSYMFAITKMDEIEWDENKFINLVNSIQSFLKESCGIIEKSKFIPISGLKGTNLTSISQEKLSQWYKSDTLLGKIDKEADTNHGTWNFLLNLPLSLTISHITPLPENQSHIYCSIHSGMLQDSQKLYVGTGRLETQITGLSSDENPKGFNVAGDMIQAKIPTLPNLCPGILIADSIDAFTSSKTAYVNATWFHGSLEKGKSMHVIALFGCHAVLTKLYCFTDSQEKAPNAIGNDLERNRTSLVKIELENAFPLVKESYINTLSRVLFVSEKWNSLIAFGTVLSLHD.

2 disordered regions span residues 1–112 (MSRL…KHKK) and 242–262 (MKKVSQQLKPQKNTNDSNNDH). The span at 32 to 47 (DSSSSSDSPNFFPSSS) shows a compositional bias: low complexity. The span at 96–107 (KTEKEKEKEPIQ) shows a compositional bias: basic and acidic residues. Residues 278–492 (KPRTKLLLLG…KIDKEADTNH (215 aa)) enclose the tr-type G domain. Residues 287–294 (GPPKSGKK), 357–361 (IFTTN), and 417–420 (TKMD) each bind GTP.

It belongs to the TRAFAC class translation factor GTPase superfamily. Classic translation factor GTPase family.

The protein resides in the cytoplasm. Its subcellular location is the nucleus. This is an uncharacterized protein from Schizosaccharomyces pombe (strain 972 / ATCC 24843) (Fission yeast).